The chain runs to 64 residues: Beta-defensin 5 (64 aa).

A signal peptide spans 1–22; sequence MRLHHLLLVLLFLVLSAGSGFT. Gln-23 carries the pyrrolidone carboxylic acid modification. 3 cysteine pairs are disulfide-bonded: Cys-31–Cys-60, Cys-38–Cys-53, and Cys-43–Cys-61.

The protein belongs to the beta-defensin family. Neutrophilic granules. Alveolar macrophages.

Its subcellular location is the secreted. Functionally, has bactericidal activity. Active against E.coli ML35 but not against S.aureus 502A. The sequence is that of Beta-defensin 5 (DEFB5) from Bos taurus (Bovine).